The primary structure comprises 388 residues: Diacylglycerol O-acyltransferase 2 (388 aa).

Residues 1 to 69 are Cytoplasmic-facing; it reads MKTLIAAYSG…NRSKVEKQLQ (69 aa). The segment at 16-40 is disordered; it reads RQAEADRSQRSHGGPALSREGSGRW. The helical transmembrane segment at 70–88 threads the bilayer; that stretch reads VISVLQWVLSFLVLGVACS. Topologically, residues 89–92 are lumenal; that stretch reads AILM. Residues 93-112 form a helical membrane-spanning segment; the sequence is YIFCTDCWLIAVLYFTWLVF. Residues 113–388 lie on the Cytoplasmic side of the membrane; it reads DWNTPKKGGR…LPETEVLEVN (276 aa).

The protein belongs to the diacylglycerol acyltransferase family. In terms of assembly, forms multimeric complexes consisting of several DGAT2 subunits. Interacts with SLC27A1 and this interaction is enhanced in the presence of ZFYVE1. In terms of tissue distribution, predominantly expressed in liver and white adipose tissue. Expressed at lower level in mammary gland, testis and peripheral blood leukocytes. Expressed in sebaceous glands of normal skin but decreased psoriatic skin.

It is found in the endoplasmic reticulum membrane. The protein resides in the lipid droplet. Its subcellular location is the cytoplasm. It localises to the perinuclear region. The enzyme catalyses an acyl-CoA + a 1,2-diacyl-sn-glycerol = a triacyl-sn-glycerol + CoA. It catalyses the reaction all-trans-retinol + an acyl-CoA = an all-trans-retinyl ester + CoA. It carries out the reaction 2-(9Z-octadecenoyl)-glycerol + (9Z)-octadecenoyl-CoA = 1,2-di-(9Z-octadecenoyl)-sn-glycerol + CoA. The catalysed reaction is 1,2-di-(9Z-octadecenoyl)-sn-glycerol + (9Z)-octadecenoyl-CoA = 1,2,3-tri-(9Z-octadecenoyl)-glycerol + CoA. The enzyme catalyses all-trans-retinol + hexadecanoyl-CoA = all-trans-retinyl hexadecanoate + CoA. It catalyses the reaction 1-O-(9Z-octadecenyl)-glycerol + (9Z)-octadecenoyl-CoA = 1-O-(9Z-octadecyl)-3-(9Z-octadecenoyl)-glycerol + CoA. It carries out the reaction 1-(9Z-octadecenoyl)-glycerol + (9Z)-octadecenoyl-CoA = 1,2-di-(9Z-octadecenoyl)-glycerol + CoA. The catalysed reaction is 1,2-di-(9Z-octadecenoyl)-sn-glycerol + hexadecanoyl-CoA = 1,2-di-(9Z)-octadecenoyl-3-hexadecanoyl-sn-glycerol + CoA. The enzyme catalyses 1,3-di-(9Z-octadecenoyl)-glycerol + (9Z)-octadecenoyl-CoA = 1,2,3-tri-(9Z-octadecenoyl)-glycerol + CoA. It catalyses the reaction 2,3-di-(9Z)-octadecenoyl-sn-glycerol + (9Z)-octadecenoyl-CoA = 1,2,3-tri-(9Z-octadecenoyl)-glycerol + CoA. It carries out the reaction 2-(9Z-octadecenoyl)-glycerol + hexadecanoyl-CoA = 1-hexadecanoyl-2-(9Z-octadecenoyl)-sn-glycerol + CoA. It functions in the pathway glycerolipid metabolism; triacylglycerol biosynthesis. Its activity is regulated as follows. Inhibited by niacin. Essential acyltransferase that catalyzes the terminal and only committed step in triacylglycerol synthesis by using diacylglycerol and fatty acyl CoA as substrates. Required for synthesis and storage of intracellular triglycerides. Probably plays a central role in cytosolic lipid accumulation. In liver, is primarily responsible for incorporating endogenously synthesized fatty acids into triglycerides. Also functions as an acyl-CoA retinol acyltransferase (ARAT). Also able to use 1-monoalkylglycerol (1-MAkG) as an acyl acceptor for the synthesis of monoalkyl-monoacylglycerol (MAMAG). In Homo sapiens (Human), this protein is Diacylglycerol O-acyltransferase 2.